Here is a 285-residue protein sequence, read N- to C-terminus: Acetyl-coenzyme A carboxylase carboxyl transferase subunit beta (285 aa).

Positions 29–285 (IMTKCPNCKK…ILKIHQEVSN (257 aa)) constitute a CoA carboxyltransferase N-terminal domain. Residues C33, C36, C52, and C55 each coordinate Zn(2+). The segment at 33–55 (CPNCKKIMYTKELNENLNVCFNC) adopts a C4-type zinc-finger fold.

The protein belongs to the AccD/PCCB family. As to quaternary structure, acetyl-CoA carboxylase is a heterohexamer composed of biotin carboxyl carrier protein (AccB), biotin carboxylase (AccC) and two subunits each of ACCase subunit alpha (AccA) and ACCase subunit beta (AccD). Zn(2+) is required as a cofactor.

Its subcellular location is the cytoplasm. The catalysed reaction is N(6)-carboxybiotinyl-L-lysyl-[protein] + acetyl-CoA = N(6)-biotinyl-L-lysyl-[protein] + malonyl-CoA. It functions in the pathway lipid metabolism; malonyl-CoA biosynthesis; malonyl-CoA from acetyl-CoA: step 1/1. Functionally, component of the acetyl coenzyme A carboxylase (ACC) complex. Biotin carboxylase (BC) catalyzes the carboxylation of biotin on its carrier protein (BCCP) and then the CO(2) group is transferred by the transcarboxylase to acetyl-CoA to form malonyl-CoA. This chain is Acetyl-coenzyme A carboxylase carboxyl transferase subunit beta, found in Staphylococcus epidermidis (strain ATCC 35984 / DSM 28319 / BCRC 17069 / CCUG 31568 / BM 3577 / RP62A).